The sequence spans 212 residues: Peptide methionine sulfoxide reductase MsrA (212 aa).

The active site involves C52.

The protein belongs to the MsrA Met sulfoxide reductase family.

The enzyme catalyses L-methionyl-[protein] + [thioredoxin]-disulfide + H2O = L-methionyl-(S)-S-oxide-[protein] + [thioredoxin]-dithiol. The catalysed reaction is [thioredoxin]-disulfide + L-methionine + H2O = L-methionine (S)-S-oxide + [thioredoxin]-dithiol. Functionally, has an important function as a repair enzyme for proteins that have been inactivated by oxidation. Catalyzes the reversible oxidation-reduction of methionine sulfoxide in proteins to methionine. In Shigella dysenteriae serotype 1 (strain Sd197), this protein is Peptide methionine sulfoxide reductase MsrA.